A 515-amino-acid chain; its full sequence is Maturase K (515 aa).

The protein belongs to the intron maturase 2 family. MatK subfamily.

It is found in the plastid. It localises to the chloroplast. Functionally, usually encoded in the trnK tRNA gene intron. Probably assists in splicing its own and other chloroplast group II introns. The protein is Maturase K of Pinus sibirica (Siberian pine).